The primary structure comprises 887 residues: Dystrophin-like protein 1 (887 aa).

One can recognise a PID domain in the interval tyrosine 30–alanine 197. Composition is skewed to basic and acidic residues over residues methionine 176–lysine 186 and isoleucine 205–arginine 216. Disordered stretches follow at residues methionine 176–isoleucine 254, glutamate 506–arginine 606, glutamine 641–alanine 753, isoleucine 804–threonine 839, and asparagine 853–glutamine 887. The segment covering lysine 242 to isoleucine 254 has biased composition (polar residues). Residues glutamine 434–glutamate 506 are a coiled coil. Positions serine 510–proline 519 are enriched in low complexity. Residues lysine 573–proline 588 show a composition bias toward basic and acidic residues. The segment covering aspartate 597–arginine 606 has biased composition (polar residues). Polar residues-rich tracts occupy residues asparagine 816–serine 827 and serine 863–glutamine 887.

Component of the dystrophin glycoprotein complex (DGC). Interacts with zyx-1. Expressed in muscles of the head, body wall and vulva. In some animals, weaker expression is observed in the intestinal muscles (at protein level). Isoform a is expressed in lateral neurons SDQL and SDQR.

Together with dys-1 and hlh-1, participates in a common muscular function. This Caenorhabditis elegans protein is Dystrophin-like protein 1.